Consider the following 155-residue polypeptide: SsrA-binding protein (155 aa).

It belongs to the SmpB family.

It is found in the cytoplasm. Its function is as follows. Required for rescue of stalled ribosomes mediated by trans-translation. Binds to transfer-messenger RNA (tmRNA), required for stable association of tmRNA with ribosomes. tmRNA and SmpB together mimic tRNA shape, replacing the anticodon stem-loop with SmpB. tmRNA is encoded by the ssrA gene; the 2 termini fold to resemble tRNA(Ala) and it encodes a 'tag peptide', a short internal open reading frame. During trans-translation Ala-aminoacylated tmRNA acts like a tRNA, entering the A-site of stalled ribosomes, displacing the stalled mRNA. The ribosome then switches to translate the ORF on the tmRNA; the nascent peptide is terminated with the 'tag peptide' encoded by the tmRNA and targeted for degradation. The ribosome is freed to recommence translation, which seems to be the essential function of trans-translation. This is SsrA-binding protein from Bordetella parapertussis (strain 12822 / ATCC BAA-587 / NCTC 13253).